The following is a 120-amino-acid chain: Testis-expressed protein 48 (120 aa).

A compositionally biased stretch (polar residues) spans 29–45; it reads KVPSQTQEHKPSTQNLL. Positions 29 to 86 are disordered; sequence KVPSQTQEHKPSTQNLLLQKDELDRQNPKRINAVSHLPSRTPLIQTKKSTSSSSSEFE. The span at 74–83 shows a compositional bias: low complexity; it reads TKKSTSSSSS.

The sequence is that of Testis-expressed protein 48 from Homo sapiens (Human).